The primary structure comprises 430 residues: Small ribosomal subunit protein uS9m (430 aa).

A mitochondrion-targeting transit peptide spans 1 to 34; that stretch reads MLSRLFLRHSNLRFVTLVSSKSNSQIFSSFIRPL. Residues 32-97 form a disordered region; it reads RPLSTNSSGG…GGEGKWPEEP (66 aa). The segment covering 39–48 has biased composition (gly residues); that stretch reads SGGGGNGDGN. Residues 68 to 79 show a composition bias toward low complexity; the sequence is GPFSSDDSFGSS. A compositionally biased stretch (gly residues) spans 80–91; sequence GVAGSGLPGGEG.

It belongs to the universal ribosomal protein uS9 family. As to quaternary structure, interacts (via C terminus) with PIA2. Component of the mitochondrial ribosome small subunit. As to expression, expressed in root tips, young leaves, flowers and siliques.

It localises to the mitochondrion. Its function is as follows. Mitochondrial ribosomal protein required for central cell maturation. May work together with PIA2 in controlling female gametophyte development, possibly by regulating the expression of some mitochondrial proteins. The chain is Small ribosomal subunit protein uS9m from Arabidopsis thaliana (Mouse-ear cress).